The chain runs to 275 residues: Shikimate dehydrogenase (NADP(+)) (275 aa).

Residues 17 to 19 and Thr64 contribute to the shikimate site; that span reads SKS. Lys68 serves as the catalytic Proton acceptor. Glu80 is a binding site for NADP(+). Shikimate-binding residues include Asn89 and Asp105. Residues 129 to 133, 152 to 157, and Met216 contribute to the NADP(+) site; these read GAGGA and NRTFFK. Tyr218 provides a ligand contact to shikimate. Gly240 contacts NADP(+).

It belongs to the shikimate dehydrogenase family. In terms of assembly, homodimer.

It catalyses the reaction shikimate + NADP(+) = 3-dehydroshikimate + NADPH + H(+). The protein operates within metabolic intermediate biosynthesis; chorismate biosynthesis; chorismate from D-erythrose 4-phosphate and phosphoenolpyruvate: step 4/7. In terms of biological role, involved in the biosynthesis of the chorismate, which leads to the biosynthesis of aromatic amino acids. Catalyzes the reversible NADPH linked reduction of 3-dehydroshikimate (DHSA) to yield shikimate (SA). This chain is Shikimate dehydrogenase (NADP(+)), found in Pectobacterium atrosepticum (strain SCRI 1043 / ATCC BAA-672) (Erwinia carotovora subsp. atroseptica).